Here is a 328-residue protein sequence, read N- to C-terminus: uncharacterized protein (328 aa).

This sequence belongs to the Gfo/Idh/MocA family.

This is an uncharacterized protein from Escherichia coli (strain K12).